We begin with the raw amino-acid sequence, 686 residues long: Glycine--tRNA ligase beta subunit (686 aa).

Belongs to the class-II aminoacyl-tRNA synthetase family. As to quaternary structure, tetramer of two alpha and two beta subunits.

The protein localises to the cytoplasm. It carries out the reaction tRNA(Gly) + glycine + ATP = glycyl-tRNA(Gly) + AMP + diphosphate. This chain is Glycine--tRNA ligase beta subunit, found in Geobacter metallireducens (strain ATCC 53774 / DSM 7210 / GS-15).